Here is a 367-residue protein sequence, read N- to C-terminus: Probable dual-specificity RNA methyltransferase RlmN (367 aa).

E92 (proton acceptor) is an active-site residue. A Radical SAM core domain is found at 98 to 326; that stretch reads QEYGLSVCVT…YDTLKKNGIN (229 aa). C105 and C341 are disulfide-bonded. C112, C116, and C119 together coordinate [4Fe-4S] cluster. S-adenosyl-L-methionine is bound by residues 164–165, S196, 219–221, and N297; these read GE and SLH. Catalysis depends on C341, which acts as the S-methylcysteine intermediate.

This sequence belongs to the radical SAM superfamily. RlmN family. [4Fe-4S] cluster is required as a cofactor.

Its subcellular location is the cytoplasm. The enzyme catalyses adenosine(2503) in 23S rRNA + 2 reduced [2Fe-2S]-[ferredoxin] + 2 S-adenosyl-L-methionine = 2-methyladenosine(2503) in 23S rRNA + 5'-deoxyadenosine + L-methionine + 2 oxidized [2Fe-2S]-[ferredoxin] + S-adenosyl-L-homocysteine. The catalysed reaction is adenosine(37) in tRNA + 2 reduced [2Fe-2S]-[ferredoxin] + 2 S-adenosyl-L-methionine = 2-methyladenosine(37) in tRNA + 5'-deoxyadenosine + L-methionine + 2 oxidized [2Fe-2S]-[ferredoxin] + S-adenosyl-L-homocysteine. Specifically methylates position 2 of adenine 2503 in 23S rRNA and position 2 of adenine 37 in tRNAs. In Listeria innocua serovar 6a (strain ATCC BAA-680 / CLIP 11262), this protein is Probable dual-specificity RNA methyltransferase RlmN.